The chain runs to 299 residues: Ribosomal protein L11 methyltransferase (299 aa).

S-adenosyl-L-methionine-binding residues include T139, G166, D188, and N231.

This sequence belongs to the methyltransferase superfamily. PrmA family.

It is found in the cytoplasm. The catalysed reaction is L-lysyl-[protein] + 3 S-adenosyl-L-methionine = N(6),N(6),N(6)-trimethyl-L-lysyl-[protein] + 3 S-adenosyl-L-homocysteine + 3 H(+). In terms of biological role, methylates ribosomal protein L11. The polypeptide is Ribosomal protein L11 methyltransferase (Thermosynechococcus vestitus (strain NIES-2133 / IAM M-273 / BP-1)).